A 65-amino-acid chain; its full sequence is Small ribosomal subunit protein bS21 (65 aa).

This sequence belongs to the bacterial ribosomal protein bS21 family.

This chain is Small ribosomal subunit protein bS21, found in Cytophaga hutchinsonii (strain ATCC 33406 / DSM 1761 / CIP 103989 / NBRC 15051 / NCIMB 9469 / D465).